Consider the following 873-residue polypeptide: Nitrate reductase [NADPH] (873 aa).

The segment at 30–61 (TELDTADIPLPPPSKEPTEVLSLDKTTPDSHV) is disordered. Cys150 is a Mo-molybdopterin binding site. Residues 512 to 587 (TRIIDLEEFK…MPDYHIGTLD (76 aa)) enclose the Cytochrome b5 heme-binding domain. Residues His547 and His570 each contribute to the heme site. An FAD-binding FR-type domain is found at 616 to 729 (KAWTKATLTK…KGPTGRFEYL (114 aa)). Residues 672 to 675 (RSYT), 689 to 693 (LIKIY), 703 to 705 (KMT), and Thr756 contribute to the FAD site. Residue 843-852 (MVLVCGPEAM) participates in NADP(+) binding.

The protein belongs to the nitrate reductase family. As to quaternary structure, homodimer. FAD is required as a cofactor. The cofactor is heme. Mo-molybdopterin serves as cofactor.

It catalyses the reaction nitrite + NADP(+) + H2O = nitrate + NADPH + H(+). Its function is as follows. Nitrate reductase is a key enzyme involved in the first step of nitrate assimilation in plants, fungi and bacteria. This is Nitrate reductase [NADPH] (niaD) from Emericella nidulans (strain FGSC A4 / ATCC 38163 / CBS 112.46 / NRRL 194 / M139) (Aspergillus nidulans).